Consider the following 395-residue polypeptide: MDVLFSIAKTVSELKKRVVVGTIYTNVEDIIQQTNELIRTLNGSTFHTGGIGTQPQKDWVVQLPQLGTTLLNLDDNYVQSARGIIDYLASFIEAVCDDEMVREASRNGMQPQSPTLIALASSKFKTINFNNSSQSIKNWSAQSRRENPVYEYKNPMVFEYRNSYILHRADQQFGNAMGLRYYTTSNTCQIAAFDSTMAENAPNNTQRFIYHGRLKRPISNVLMKVERGAPNVNNPTILPDPTNQTTWLFNPVQVMNGTFTIEFYNNGQLVDMVRNMGIATVRTFDSYRITIDMIRPAAMTQYVQQLFPVGGPYSHQAAYMLTLSVLDATTESVLCDSHSVDYSIVANTRRDSAMPAGTVFQPGFPWEQTLSNYTVAQEDNLERLLLVASVKRMVM.

It belongs to the rotavirus VP6 family. In terms of assembly, homotrimer. Interacts with the inner capsid protein VP2. Interacts with the outer capsid glycoprotein VP7.

The protein resides in the virion. Its function is as follows. Intermediate capsid protein that self assembles to form an icosahedral capsid with a T=13 symmetry, which consists of 230 trimers of VP6, with channels at each of its five-fold vertices. This capsid constitutes the middle concentric layer of the viral mature particle. The innermost VP2 capsid and the intermediate VP6 capsid remain intact following cell entry to protect the dsRNA from degradation and to prevent unfavorable antiviral responses in the host cell during all the replication cycle of the virus. Nascent transcripts are transcribed within the structural confines of this double-layered particle (DLP) and are extruded through the channels at the five-fold axes. VP6 is required for the transcription activity of the DLP. In Bos taurus (Bovine), this protein is Intermediate capsid protein VP6.